We begin with the raw amino-acid sequence, 267 residues long: 2-keto-3-deoxy-L-rhamnonate aldolase (267 aa).

His-49 functions as the Proton acceptor in the catalytic mechanism. Gln-151 provides a ligand contact to substrate. Mg(2+) is bound at residue Glu-153. Substrate-binding residues include Ala-178 and Asp-179. Asp-179 is a binding site for Mg(2+).

It belongs to the HpcH/HpaI aldolase family. KDR aldolase subfamily. As to quaternary structure, homohexamer. Mg(2+) serves as cofactor.

The catalysed reaction is 2-dehydro-3-deoxy-L-rhamnonate = (S)-lactaldehyde + pyruvate. Functionally, catalyzes the reversible retro-aldol cleavage of 2-keto-3-deoxy-L-rhamnonate (KDR) to pyruvate and lactaldehyde. This chain is 2-keto-3-deoxy-L-rhamnonate aldolase, found in Escherichia coli O157:H7.